We begin with the raw amino-acid sequence, 1219 residues long: Pheromone-regulated membrane protein 10 (1219 aa).

The span at 1 to 11 (MMRTQSDEHVA) shows a compositional bias: basic and acidic residues. Disordered stretches follow at residues 1 to 273 (MMRT…IERE), 303 to 490 (LASF…DPFT), 503 to 533 (HDDD…EDYV), and 555 to 713 (EGNK…RPVK). Residues 42 to 53 (DENDDGHDDSDE) are compositionally biased toward acidic residues. Positions 57–68 (SVVIPTPSVVIV) are enriched in low complexity. A compositionally biased stretch (polar residues) spans 104–115 (LKSPGTPTTYSP). The span at 136–155 (GSSLSSTTLMNTLLNSSGLG) shows a compositional bias: low complexity. 2 stretches are compositionally biased toward acidic residues: residues 159–171 (TESE…DEEV) and 219–231 (QEEE…DDDG). Composition is skewed to basic and acidic residues over residues 259 to 273 (ADRA…IERE), 330 to 346 (DDQR…RREN), and 395 to 421 (LDRR…EKER). Residues 422-432 (QHHHHNHHHHH) show a composition bias toward basic residues. Residues 435–446 (ETGPNTGASSPF) show a composition bias toward polar residues. Basic and acidic residues predominate over residues 448 to 470 (EEEKDREAEEAEILRDQARDLVN). A compositionally biased stretch (low complexity) spans 565–577 (TTVGDGTSTGDVS). Residues 598 to 615 (KSKTKTTQKLGLKKKKKE) are compositionally biased toward basic residues. The segment covering 616–641 (LLKIIEDQRKEKEENKKRPKWYDKSR) has biased composition (basic and acidic residues). The segment covering 642–652 (STSPSPGGTPA) has biased composition (low complexity). The segment covering 653–673 (PHHHHHIPGLHLHHHTKGHQR) has biased composition (basic residues). Residues 693-713 (GGDKPPDRPRSLRSEALRPVK) show a composition bias toward basic and acidic residues. Transmembrane regions (helical) follow at residues 864-884 (PPWL…PYAF), 888-908 (WADI…QIIV), 918-938 (VFEV…GTIS), 945-965 (FCFA…YIVL), 983-1003 (MFYA…GAVV), 1021-1041 (LDPL…ALVN), 1049-1069 (PSML…GANI), 1075-1095 (SSYL…NLYS), 1100-1120 (GLAF…GVAS), and 1184-1204 (LGFT…AATL).

The protein belongs to the ThrE exporter (TC 2.A.79) family.

The protein localises to the membrane. The protein is Pheromone-regulated membrane protein 10 of Yarrowia lipolytica (strain CLIB 122 / E 150) (Yeast).